Reading from the N-terminus, the 955-residue chain is MDPDPQAGVQVGMRVVRGVDWKWGQQDGGEGGVGTVVELGRHGSPSTPDRTVVVQWDQGTRTNYRAGYQGAHDLLLYDNAQIGVRHPNIICDCCKKHGLRGMRWKCRVCLDYDLCTQCYMHNKHELAHAFDRYETAHSRPVTLSPRQGLPRIPLRGIFQGAKVVRGPDWEWGSQDGGEGKPGRVVDIRGWDVETGRSVASVTWADGTTNVYRVGHKGKVDLKCVGEAAGGFYYKDHLPRLGKPAELQRRVSADSQPFQHGDKVKCLLDTDVLREMQEGHGGWNPRMAEFIGQTGTVHRITDRGDVRVQFNHETRWTFHPGALTKHHSFWVGDVVRVIGDLDTVKRLQAGHGEWTDDMAPALGRVGKVVKVFGDGNLRVAVAGQRWTFSPSCLVAYRPEEDANLDVAERARENKSSLSVALDKLRAQKSDPEHPGRLVVEVALGNAARALDLLRRRPEQVDTKNQGRTALQVAAYLGQVELIRLLLQARAGVDLPDDEGNTALHYAALGNQPEATRVLLSAGCRADAINSTQSTALHVAVQRGFLEVVRALCERGCDVNLPDAHSDTPLHSAISAGTGASGIVEVLTEVPNIDVTATNSQGFTLLHHASLKGHALAVRKILARARQLVDAKKEDGFTALHLAALNNHREVAQILIREGRCDVNVRNRKLQSPLHLAVQQAHVGLVPLLVDAGCSVNAEDEEGDTALHVALQRHQLLPLVADGAGGDPGPLQLLSRLQASGLPGSAELTVGAAVACFLALEGADVSYTNHRGRSPLDLAAEGRVLKALQGCAQRFRERQAGGGAAPGPRQTLGTPNTVTNLHVGAAPGPEAAECLVCSELALLVLFSPCQHRTVCEECARRMKKCIRCQVVVSKKLRPDGSEVASAAPAPGPPRQLVEELQSRYRQMEERITCPICIDSHIRLVFQCGHGACAPCGSALSACPICRQPIRDRIQIFV.

Met-1 is subject to N-acetylmethionine. The MIB/HERC2 1 domain occupies 1–80 (MDPDPQAGVQ…AHDLLLYDNA (80 aa)). The ZZ-type zinc finger occupies 86 to 138 (HPNIICDCCKKHGLRGMRWKCRVCLDYDLCTQCYMHNKHELAHAFDRYETAHS). Cys-91, Cys-94, Cys-106, Cys-109, Cys-115, Cys-118, His-124, and His-128 together coordinate Zn(2+). The 79-residue stretch at 149–227 (LPRIPLRGIF…KVDLKCVGEA (79 aa)) folds into the MIB/HERC2 2 domain. Phosphoserine is present on Ser-251. 9 ANK repeats span residues 464–493 (QGRT…GVDL), 497–526 (EGNT…RADA), 530–559 (TQST…DVNL), 563–595 (HSDT…DVTA), 599–628 (QGFT…QLVD), 633–663 (DGFT…DVNV), 667–696 (KLQS…SVNA), 700–728 (EGDT…DPGP), and 769–798 (RGRS…ERQA). 2 consecutive RING-type zinc fingers follow at residues 832 to 867 (CLVC…IRCQ) and 911 to 944 (CPIC…PICR).

In terms of assembly, interacts with actin monomer. Post-translationally, ubiquitinated. Possibly via autoubiquitination. As to expression, expressed in skeletal muscle, and to a lesser extent in heart, brain and kidney.

It localises to the cytoplasm. It is found in the endosome. It catalyses the reaction S-ubiquitinyl-[E2 ubiquitin-conjugating enzyme]-L-cysteine + [acceptor protein]-L-lysine = [E2 ubiquitin-conjugating enzyme]-L-cysteine + N(6)-ubiquitinyl-[acceptor protein]-L-lysine.. It participates in protein modification; protein ubiquitination. E3 ubiquitin-protein ligase that mediates ubiquitination of Delta receptors, which act as ligands of Notch proteins. Positively regulates the Delta-mediated Notch signaling by ubiquitinating the intracellular domain of Delta, leading to endocytosis of Delta receptors. The chain is E3 ubiquitin-protein ligase MIB2 from Homo sapiens (Human).